Consider the following 219-residue polypeptide: tRNA (guanine-N(7)-)-methyltransferase (219 aa).

Residues Glu-43, Asp-68, Glu-101, and Asn-124 each contribute to the S-adenosyl-L-methionine site. Substrate is bound by residues Lys-128 and Asp-160.

The protein belongs to the class I-like SAM-binding methyltransferase superfamily. TrmB family.

The catalysed reaction is guanosine(46) in tRNA + S-adenosyl-L-methionine = N(7)-methylguanosine(46) in tRNA + S-adenosyl-L-homocysteine. It participates in tRNA modification; N(7)-methylguanine-tRNA biosynthesis. Its function is as follows. Catalyzes the formation of N(7)-methylguanine at position 46 (m7G46) in tRNA. The protein is tRNA (guanine-N(7)-)-methyltransferase of Clostridium botulinum (strain Alaska E43 / Type E3).